We begin with the raw amino-acid sequence, 202 residues long: Coiled-coil domain-containing protein 69 (202 aa).

The span at 1 to 11 (MGCRQSRHSRG) shows a compositional bias: basic residues. Disordered stretches follow at residues 1–20 (MGCR…VEET) and 32–52 (GRIL…SNAQ). Gly2 is lipidated: N-myristoyl glycine. The segment covering 32-42 (GRILEGRHEEA) has biased composition (basic and acidic residues). Ser92 carries the post-translational modification Phosphoserine. Residues 112 to 146 (WEQELESLHHVIEMKNERIHELEKQLFLLEMLKEK) are a coiled coil.

Belongs to the CCDC69 family.

The protein resides in the cytoplasm. It is found in the cytoskeleton. The protein localises to the spindle. It localises to the midbody. Its function is as follows. May act as a scaffold to regulate the recruitment and assembly of spindle midzone components. Required for the localization of AURKB and PLK1 to the spindle midzone. The polypeptide is Coiled-coil domain-containing protein 69 (Ccdc69) (Mus musculus (Mouse)).